Here is a 262-residue protein sequence, read N- to C-terminus: Ribose-5-phosphate isomerase A (262 aa).

Substrate-binding positions include 33 to 36, 89 to 92, and 102 to 105; these read TGST, DGAD, and KGGG. Glu111 (proton acceptor) is an active-site residue. A substrate-binding site is contributed by Lys129.

This sequence belongs to the ribose 5-phosphate isomerase family. Homodimer.

The catalysed reaction is aldehydo-D-ribose 5-phosphate = D-ribulose 5-phosphate. Its pathway is carbohydrate degradation; pentose phosphate pathway; D-ribose 5-phosphate from D-ribulose 5-phosphate (non-oxidative stage): step 1/1. In terms of biological role, catalyzes the reversible conversion of ribose-5-phosphate to ribulose 5-phosphate. The polypeptide is Ribose-5-phosphate isomerase A (Cereibacter sphaeroides (strain ATCC 17029 / ATH 2.4.9) (Rhodobacter sphaeroides)).